We begin with the raw amino-acid sequence, 101 residues long: NAD(P)H-quinone oxidoreductase subunit 4L, chloroplastic (101 aa).

Transmembrane regions (helical) follow at residues 2–22 (MLEH…YGLI), 32–52 (MCLE…SDFF), and 61–81 (IFSI…LAIV).

It belongs to the complex I subunit 4L family. NDH is composed of at least 16 different subunits, 5 of which are encoded in the nucleus.

It is found in the plastid. The protein localises to the chloroplast thylakoid membrane. The catalysed reaction is a plastoquinone + NADH + (n+1) H(+)(in) = a plastoquinol + NAD(+) + n H(+)(out). The enzyme catalyses a plastoquinone + NADPH + (n+1) H(+)(in) = a plastoquinol + NADP(+) + n H(+)(out). In terms of biological role, NDH shuttles electrons from NAD(P)H:plastoquinone, via FMN and iron-sulfur (Fe-S) centers, to quinones in the photosynthetic chain and possibly in a chloroplast respiratory chain. The immediate electron acceptor for the enzyme in this species is believed to be plastoquinone. Couples the redox reaction to proton translocation, and thus conserves the redox energy in a proton gradient. The chain is NAD(P)H-quinone oxidoreductase subunit 4L, chloroplastic from Panax ginseng (Korean ginseng).